The primary structure comprises 2822 residues: MASEVVCGLIFRLLLPICLAVACAFRYNGLSFVYLIYLLLIPLFSEPTKATMQGHTGRLLQSLCITSLSFLLLHIIFHITLASLEAQHRITPAYNCSTWEKTFRQIGFESLKGADAGNGIRVFVPDIGMFIASLTIWLVCRTIVKKPDTEEIAQLNSECENEELAGGEKMDSEEALIYEEDLDGEEGMEGELEESTKLKILRRFASVASKLKEFIGNMITTAGKVVVTILLGSSGMMLPSLTSAVYFFVFLGLCTWWSWCRTFDPLLFGCLCVLLAIFTAGHLIGLYLYQFQFFQEAVPPNDYYARLFGIKSVIQTDCASTWKIIVNPDLSWYHHANPILLLVMYYTLATLIRIWLQEPLVQEEMAKEDEGALDCSSNQNTAERRRSLWYATQYPTDERKLLSMTQDDYKPSDGLLVTVNGNPVDYHTIHPSLPIENGPAKTDLYTTPQYRWEPSEESSEKKEEEEDKREDSEGEGSQEEKRSVRMHAMVAVFQFIMKQSYICALIAMMAWSITYHSWLTFVLLIWSCTLWMIRNRRKYAMISSPFMVVYANLLLVLQYIWSFELPEIKKVPGFLEKKEPGELASKILFTITFWLLLRQHLTEQKALREKEALLSEVKIGSQELEEKEDEELQDVQVEGEPTEKEEEEEEEIKEERHEVKKEEEEEVEEDDDQDIMKVLGNLVVALFIKYWIYVCGGMFFFVSFEGKIVMYKIIYMVLFLFCVALYQVHYEWWRKILKYFWMSVVIYTMLVLIFIYTYQFENFPGLWQNMTGLKKEKLEDLGLKQFTVAELFTRIFIPTSFLLVCILHLHYFHDRFLELTDLKSIPSKEDNTIYSHAKVNGRVYLIINRLAHPEGSLPDLAIMNMTASLDKPEVQKLAESGEERPEECVKKTEKGEAGKDSDESEEEEDEEEESEEEESSDLRNKWHLVIDRLTVLFLKFLEYFHKLQVFMWWILELHIIKIVSSYIIWVTVKEVSLFNYVFLISWAFALPYAKLRRAASSVCTVWTCVIIVCKMLYQLQTIKPENFSVNCSLPNENQTNIPLHELNKSLLYSAPVDPTEWVGLRKSSPLLVYLRNNLLMLAILAFEVTVYRHQEYYRGRNNLTAPVSKTIFHDITRLHLDDGLINCAKYFVNYFFYKFGLETCFLMSVNVIGQRMDFYAMIHACWLIGVLYRRRRKAIAEVWPKYCCFLACIITFQYFVCIGIPPAPCRDYPWRFKGAYFNDNIIKWLYFPDFIVRPNPVFLVYDFMLLLCASLQRQIFEDENKAAVRIMAGDNVEICMNLDAASFSQHNPVPDFIHCRSYLDMSKVIIFSYLFWFVLTIIFITGTTRISIFCMGYLVACFYFLLFGGDLLLKPIKSILRYWDWLIAYNVFVITMKNILSIGACGYIGALVRNSCWLIQAFSLACTVKGYQMPEDDSRCKLPSGEAGIIWDSICFAFLLLQRRVFMSYYFLHVVADIKASQILASRGAELFQATIVKAVKARIEEEKKSMDQLKRQMDRIKARQQKYKKGKERMLSLTQESGEGQDIQKVSEEDDEREADKQKAKGKKKQWWRPWVDHASMVRSGDYYLFETDSEEEEEEELKKEDEEPPRKSAFQFVYQAWITDPKTALRQRRKEKKKLAREEQKERRKGSGDGPVEWEDREDEPVKKKSDGPDNIIKRIFNILKFTWVLFLATVDSFTTWLNSISREHIDISTVLRIERCMLTREIKKGNVPTRESIHMYYQNHIMNLSRESGLDTIDEHSGAGSRAQAAHRMDSLDSRDSISSCYTEATLLISRQSTLDDLDGQDPVPKTSERARPRLRKMFSLDMSSSSADSGSVASSEPTQCTMLYSRQGTTETIEEVEAEAEEEVVEGLEPELHDAEEKEYAAEYEAGVEEISLTPDEELPQFSTDDCEAPPSYSKAVSFEHLSFASQDDSGAKNHMVVSPDDSRTDKLESSILPPLTHELTASDLLMSKMFHDDELEESEKFYVDQPRFLLLFYAMYNTLVARSEMVCYFVIILNHMTSASIITLLLPILIFLWAMLSVPRPSRRFWMMAIVYTEVAIVVKYFFQFGFFPWNKDLEIYKERPYFPPNIIGVEKKEGYVLYDLIQLLALFFHRSILKCHGLWDEDDIVDSNTDKEGSDDELSLDQGRRGSSDSLKSINLAASVESVHVTFPEQPAAIRRKRSCSSSQISPRSSFSSNRSKRGSTSTRNSSQKGSSVLSLKQKSKRELYMEKLQEHLIKAKAFTIKKTLQIYVPIRQFFYDLIHPDYSAVTDVYVLMFLADTVDFIIIVFGFWAFGKHSAAADITSSLSEDQVPGPFLVMVLIQFGTMVVDRALYLRKTVLGKVIFQVILVFGIHFWMFFILPGVTERKFSQNLVAQLWYFVKCVYFGLSAYQIRCGYPTRVLGNFLTKSYNYVNLFLFQGFRLVPFLTELRAVMDWVWTDTTLSLSSWICVEDIYAHIFILKCWRESEKRYPQPRGQKKKKAVKYGMGGMIIVLLICIVWFPLLFMSLIKSVAGVINQPLDVSVTITLGGYQPIFTMSAQQSQLKVMDNSKYNEFLKSFGPNSGAMQFLENYEREDVTVAELEGNSNSLWTISPPSKQKMIQELTDPNSCFSVVFSWSIQRNMTLGAKAEIATDKLSFPLAVATRNSIAKMIAGNDTESSNTPVTIEKIYPYYVKAPSDSNSKPIKQLLSENNFMNITIILFRDNVTKSNSEWWVLNLTGSRIFNQGSQALELVVFNDKVSPPSLGFLAGYGIMGLYASVVLVIGKFVREFFSGISHSIMFEELPNVDRILKLCTDIFLVRETGELELEEDLYAKLIFLYRSPETMIKWTREKTN.

Topologically, residues 1-12 are cytoplasmic; that stretch reads MASEVVCGLIFR. Residues 13 to 24 form a helical membrane-spanning segment; it reads LLLPICLAVACA. At 25 to 30 the chain is on the extracellular side; sequence FRYNGL. The helical transmembrane segment at 31–43 threads the bilayer; it reads SFVYLIYLLLIPL. Topologically, residues 44–50 are cytoplasmic; the sequence is FSEPTKA. Residues 51 to 76 form a helical membrane-spanning segment; the sequence is TMQGHTGRLLQSLCITSLSFLLLHII. The Extracellular portion of the chain corresponds to 77–122; sequence FHITLASLEAQHRITPAYNCSTWEKTFRQIGFESLKGADAGNGIRV. N-linked (GlcNAc...) asparagine glycosylation is present at Asn-95. A helical transmembrane segment spans residues 123–141; that stretch reads FVPDIGMFIASLTIWLVCR. Over 142-221 the chain is Cytoplasmic; that stretch reads TIVKKPDTEE…KEFIGNMITT (80 aa). Residues 222-237 form a helical membrane-spanning segment; the sequence is AGKVVVTILLGSSGMM. Over 238–240 the chain is Extracellular; the sequence is LPS. A helical transmembrane segment spans residues 241-258; that stretch reads LTSAVYFFVFLGLCTWWS. Over 259-264 the chain is Cytoplasmic; that stretch reads WCRTFD. A helical transmembrane segment spans residues 265–287; the sequence is PLLFGCLCVLLAIFTAGHLIGLY. The Extracellular segment spans residues 288–335; it reads LYQFQFFQEAVPPNDYYARLFGIKSVIQTDCASTWKIIVNPDLSWYHH. Residues 336–355 form a helical membrane-spanning segment; the sequence is ANPILLLVMYYTLATLIRIW. Residues 356-492 are Cytoplasmic-facing; the sequence is LQEPLVQEEM…SVRMHAMVAV (137 aa). The segment at 450–481 is disordered; that stretch reads YRWEPSEESSEKKEEEEDKREDSEGEGSQEEK. Residues 455–482 are a coiled coil; the sequence is SEESSEKKEEEEDKREDSEGEGSQEEKR. The span at 463-477 shows a compositional bias: acidic residues; it reads EEEEDKREDSEGEGS. A helical transmembrane segment spans residues 493-514; the sequence is FQFIMKQSYICALIAMMAWSIT. The Extracellular segment spans residues 515–519; that stretch reads YHSWL. The helical transmembrane segment at 520–531 threads the bilayer; that stretch reads TFVLLIWSCTLW. The Cytoplasmic portion of the chain corresponds to 532–535; that stretch reads MIRN. The helical transmembrane segment at 536–562 threads the bilayer; it reads RRKYAMISSPFMVVYANLLLVLQYIWS. At 563 to 583 the chain is on the extracellular side; it reads FELPEIKKVPGFLEKKEPGEL. Residues 584–614 traverse the membrane as a helical segment; it reads ASKILFTITFWLLLRQHLTEQKALREKEALL. Residues 615-689 are Cytoplasmic-facing; the sequence is SEVKIGSQEL…GNLVVALFIK (75 aa). Acidic residues-rich tracts occupy residues 624–633 and 643–652; these read LEEKEDEELQ and EKEEEEEEEI. The segment at 624–668 is disordered; sequence LEEKEDEELQDVQVEGEPTEKEEEEEEEIKEERHEVKKEEEEEVE. Residues 653–662 are compositionally biased toward basic and acidic residues; it reads KEERHEVKKE. A helical membrane pass occupies residues 690 to 703; the sequence is YWIYVCGGMFFFVS. The Extracellular portion of the chain corresponds to 704 to 709; sequence FEGKIV. The chain crosses the membrane as a helical span at residues 710–728; it reads MYKIIYMVLFLFCVALYQV. Over 729-737 the chain is Cytoplasmic; it reads HYEWWRKIL. The helical transmembrane segment at 738 to 757 threads the bilayer; it reads KYFWMSVVIYTMLVLIFIYT. Residues 758 to 789 are Extracellular-facing; it reads YQFENFPGLWQNMTGLKKEKLEDLGLKQFTVA. The chain crosses the membrane as a helical span at residues 790–811; sequence ELFTRIFIPTSFLLVCILHLHY. Residues 812-957 are Cytoplasmic-facing; sequence FHDRFLELTD…QVFMWWILEL (146 aa). At Ser-856 the chain carries Phosphoserine. Residues 875–901 show a composition bias toward basic and acidic residues; the sequence is QKLAESGEERPEECVKKTEKGEAGKDS. The tract at residues 875–919 is disordered; that stretch reads QKLAESGEERPEECVKKTEKGEAGKDSDESEEEEDEEEESEEEES. Positions 902-919 are enriched in acidic residues; it reads DESEEEEDEEEESEEEES. A helical transmembrane segment spans residues 958–973; it reads HIIKIVSSYIIWVTVK. Topologically, residues 974 to 979 are extracellular; that stretch reads EVSLFN. The chain crosses the membrane as a helical span at residues 980-989; that stretch reads YVFLISWAFA. The Cytoplasmic segment spans residues 990 to 997; that stretch reads LPYAKLRR. The helical transmembrane segment at 998 to 1018 threads the bilayer; it reads AASSVCTVWTCVIIVCKMLYQ. Topologically, residues 1019–1074 are extracellular; that stretch reads LQTIKPENFSVNCSLPNENQTNIPLHELNKSLLYSAPVDPTEWVGLRKSSPLLVYL. A glycan (N-linked (GlcNAc...) asparagine) is linked at Asn-1030. A disulfide bridge connects residues Cys-1031 and Cys-1209. The chain crosses the membrane as a helical span at residues 1075–1099; that stretch reads RNNLLMLAILAFEVTVYRHQEYYRG. Residues 1100 to 1140 are Cytoplasmic-facing; the sequence is RNNLTAPVSKTIFHDITRLHLDDGLINCAKYFVNYFFYKFG. A helical membrane pass occupies residues 1141–1155; the sequence is LETCFLMSVNVIGQR. Over 1156–1157 the chain is Extracellular; sequence MD. The chain crosses the membrane as a helical span at residues 1158-1171; it reads FYAMIHACWLIGVL. Residues 1172 to 1182 lie on the Cytoplasmic side of the membrane; sequence YRRRRKAIAEV. A helical transmembrane segment spans residues 1183–1202; the sequence is WPKYCCFLACIITFQYFVCI. The Extracellular portion of the chain corresponds to 1203–1239; the sequence is GIPPAPCRDYPWRFKGAYFNDNIIKWLYFPDFIVRPN. The chain crosses the membrane as a helical span at residues 1240–1260; it reads PVFLVYDFMLLLCASLQRQIF. Residues 1261 to 1314 lie on the Cytoplasmic side of the membrane; sequence EDENKAAVRIMAGDNVEICMNLDAASFSQHNPVPDFIHCRSYLDMSKVIIFSYL. The chain crosses the membrane as a helical span at residues 1315–1327; that stretch reads FWFVLTIIFITGT. Residues 1328 to 1333 are Extracellular-facing; sequence TRISIF. Residues 1334 to 1346 form a helical membrane-spanning segment; that stretch reads CMGYLVACFYFLL. Over 1347 to 1355 the chain is Cytoplasmic; it reads FGGDLLLKP. A helical membrane pass occupies residues 1356–1381; it reads IKSILRYWDWLIAYNVFVITMKNILS. Over 1382–1430 the chain is Extracellular; the sequence is IGACGYIGALVRNSCWLIQAFSLACTVKGYQMPEDDSRCKLPSGEAGII. The helical transmembrane segment at 1431–1447 threads the bilayer; sequence WDSICFAFLLLQRRVFM. Residues 1448 to 1991 lie on the Cytoplasmic side of the membrane; it reads SYYFLHVVAD…YAMYNTLVAR (544 aa). Residues 1475–1515 adopt a coiled-coil conformation; sequence TIVKAVKARIEEEKKSMDQLKRQMDRIKARQQKYKKGKERM. Disordered stretches follow at residues 1505-1551 and 1611-1653; these read QQKY…KKKQ and LRQR…KKSD. The segment covering 1611 to 1621 has biased composition (basic residues); it reads LRQRRKEKKKL. The span at 1622–1633 shows a compositional bias: basic and acidic residues; sequence AREEQKERRKGS. A helical membrane pass occupies residues 1992–2006; the sequence is SEMVCYFVIILNHMT. Residues 2007-2013 are Extracellular-facing; sequence SASIITL. A helical transmembrane segment spans residues 2014–2025; sequence LLPILIFLWAML. At 2026 to 2031 the chain is on the cytoplasmic side; it reads SVPRPS. Residues 2032-2053 traverse the membrane as a helical segment; that stretch reads RRFWMMAIVYTEVAIVVKYFFQ. The Extracellular portion of the chain corresponds to 2054 to 2086; sequence FGFFPWNKDLEIYKERPYFPPNIIGVEKKEGYV. The helical transmembrane segment at 2087–2105 threads the bilayer; it reads LYDLIQLLALFFHRSILKC. Residues 2106–2259 lie on the Cytoplasmic side of the membrane; the sequence is HGLWDEDDIV…HPDYSAVTDV (154 aa). 2 disordered regions span residues 2120–2139 and 2164–2205; these read DKEG…GSSD and IRRK…SVLS. Positions 2170–2197 are enriched in low complexity; the sequence is CSSSQISPRSSFSSNRSKRGSTSTRNSS. The helical transmembrane segment at 2260–2279 threads the bilayer; sequence YVLMFLADTVDFIIIVFGFW. Residues 2280-2301 are Extracellular-facing; the sequence is AFGKHSAAADITSSLSEDQVPG. The helical transmembrane segment at 2302-2322 threads the bilayer; that stretch reads PFLVMVLIQFGTMVVDRALYL. Over 2323 to 2326 the chain is Cytoplasmic; it reads RKTV. The chain crosses the membrane as a helical span at residues 2327-2350; it reads LGKVIFQVILVFGIHFWMFFILPG. Residues 2351–2359 are Extracellular-facing; that stretch reads VTERKFSQN. The helical transmembrane segment at 2360-2382 threads the bilayer; that stretch reads LVAQLWYFVKCVYFGLSAYQIRC. Residues 2383–2467 are Cytoplasmic-facing; the sequence is GYPTRVLGNF…YPQPRGQKKK (85 aa). Residues 2468–2491 traverse the membrane as a helical segment; that stretch reads KAVKYGMGGMIIVLLICIVWFPLL. Residues 2492-2739 lie on the Extracellular side of the membrane; that stretch reads FMSLIKSVAG…PSLGFLAGYG (248 aa). The N-linked (GlcNAc...) asparagine glycan is linked to Asn-2692. Residues 2740–2760 form a helical membrane-spanning segment; the sequence is IMGLYASVVLVIGKFVREFFS. Over 2761-2822 the chain is Cytoplasmic; it reads GISHSIMFEE…MIKWTREKTN (62 aa).

This sequence belongs to the PIEZO (TC 1.A.75) family. Homotrimer; the homotrimer forms a propeller-shaped Piezo channel with a cation-ion conducting pore. Heterotrimeric interaction may occur between PIEZO1 and PIEZO2. Interacts with STOM13. Interacts with TMC7; the interaction inhibits PIEZO2-conducted mechanically activated currents. Interacts with TMC1; the interaction may be part of the MET complex. Interacts with MDFIC (via C-terminus); the interaction prolongs Piezo channel inactivation. Interacts with MDFI (via C-terminus); the interaction prolongs Piezo channel inactivation. In terms of tissue distribution, expressed in bladder, colon, and lung, but less abundant in kidney or skin. Strong expression is observed in dorsal root ganglia (DRG) sensory neurons. Expressed in a wide range of cutaneous low-threshold mechanoreceptors (LTMRs), including Merkel cells and Meissner's corpuscles. Expressed in sensory neurons. Expressed in cochlear inner and outer hair cells and vestibular organ hair cells. Expressed in pulmonary neuroepithelial cell bodies. Expressed in bladder urothelium and sensory neurons of the lower urinary tract. Expressed in sensory endings of proprioceptors innervating muscle spindles and Golgi tendon organs.

It is found in the cell membrane. The enzyme catalyses Ca(2+)(in) = Ca(2+)(out). Regulated by auxillary subunits MDFIC and MDFI. Channel activity is inhibited by TMEM120aa. Phosphatidic acid and lysophosphatidic acid inhibit Piezo2 channel activity. In terms of biological role, pore-forming subunit of the mechanosensitive non-specific cation Piezo channel required for rapidly adapting mechanically activated (MA) currents and has a key role in sensing touch and tactile pain. Piezo channels are homotrimeric three-blade propeller-shaped structures that utilize a cap-motion and plug-and-latch mechanism to gate their ion-conducting pathways. Expressed in sensory neurons, is essential for diverse physiological processes, including respiratory control, systemic metabolism, urinary function, and proprioception. Mediates airway stretch sensing, enabling efficient respiration at birth and maintaining normal breathing in adults. It regulates brown and beige adipose tissue morphology and function, preventing systemic hypermetabolism. In the lower urinary tract, acts as a sensor in both the bladder urothelium and innervating sensory neurons and is required for bladder-stretch sensing and urethral micturition reflexes, ensuring proper urinary function. Additionally, Piezo2 serves as the principal mechanotransducer in proprioceptors, facilitating proprioception and coordinated body movements. In inner ear hair cells, PIEZO1/2 subunits may constitute part of the mechanotransducer (MET) non-selective cation channel complex where they may act as pore-forming ion-conducting component in the complex. Required for Merkel-cell mechanotransduction. Plays a major role in light-touch mechanosensation. The sequence is that of Piezo-type mechanosensitive ion channel component 2 from Mus musculus (Mouse).